We begin with the raw amino-acid sequence, 155 residues long: Protein FAM162B (155 aa).

The helical transmembrane segment at 95–114 (VKACYIMMGLTIFACLVMIV) threads the bilayer.

Belongs to the UPF0389 family.

The protein localises to the membrane. This Danio rerio (Zebrafish) protein is Protein FAM162B (fam162b).